Consider the following 122-residue polypeptide: Secreted RxLR effector protein 80 (122 aa).

The N-terminal stretch at Met-1–Ser-21 is a signal peptide. The RxLR motif lies at Arg-72–Arg-75.

Belongs to the RxLR effector family.

The protein resides in the secreted. It localises to the host endoplasmic reticulum membrane. Functionally, secreted effector that dos not suppress the host cell death induced by cell death-inducing proteins. This Plasmopara viticola (Downy mildew of grapevine) protein is Secreted RxLR effector protein 80.